The chain runs to 220 residues: UPF0319 protein YccT (220 aa).

A signal peptide spans 1-20 (MKTGALTTFLALCLPVTVFA).

The protein belongs to the UPF0319 family.

In Salmonella dublin (strain CT_02021853), this protein is UPF0319 protein YccT.